We begin with the raw amino-acid sequence, 583 residues long: Chitinase 2 (583 aa).

Residues 1–19 (MLSFKSLLAAAVVASSALA) form the signal peptide. The region spanning 23-305 (NQVALYWGQN…VQVKNVLNQN (283 aa)) is the GH18 domain. The active-site Proton donor is the glutamate 153. N-linked (GlcNAc...) asparagine glycosylation is found at asparagine 370, asparagine 546, and asparagine 549. A lipid anchor (GPI-anchor amidated glycine) is attached at glycine 560. Positions 561–583 (AAVANSLNSVWFTVPFLLAAFAF) are cleaved as a propeptide — removed in mature form.

It belongs to the glycosyl hydrolase 18 family. Chitinase class III subfamily. In terms of processing, the GPI-anchor is attached to the protein in the endoplasmic reticulum and serves to target the protein to the cell surface. There, the glucosamine-inositol phospholipid moiety is cleaved off and the GPI-modified mannoprotein is covalently attached via its lipidless GPI glycan remnant to the 1,6-beta-glucan of the outer cell wall layer. Post-translationally, proteolytic cleavage by SAP9 and SAP10 leads to the cell wall release of CHT2 and increased chitinase activity, suggesting a direct influence of SAP9 and SAP10 on CHT2 function.

Its subcellular location is the secreted. It is found in the cell wall. It localises to the membrane. The enzyme catalyses Random endo-hydrolysis of N-acetyl-beta-D-glucosaminide (1-&gt;4)-beta-linkages in chitin and chitodextrins.. Chitinase involved in the remodeling of chitin in the fungal cell wall. Plays a role in cell separation. The polypeptide is Chitinase 2 (CHT2) (Candida albicans (strain SC5314 / ATCC MYA-2876) (Yeast)).